A 433-amino-acid chain; its full sequence is 26S proteasome regulatory subunit 7 (433 aa).

Residues 1–22 form a disordered region; it reads MPDYLGADQRKTKEDEKDDKPI. Residues 8 to 22 show a composition bias toward basic and acidic residues; that stretch reads DQRKTKEDEKDDKPI. At Lys116 the chain carries N6-acetyllysine. 216-223 is an ATP binding site; the sequence is GPPGTGKT. Lys422 is modified (N6-acetyllysine).

It belongs to the AAA ATPase family. Component of the 19S proteasome regulatory particle complex. The 26S proteasome consists of a 20S core particle (CP) and two 19S regulatory subunits (RP). The regulatory particle is made of a lid composed of 9 subunits, a base containing 6 ATPases including PSMC2 and few additional components. Interacts with NDC80/HEC; this interaction is detected only during M phase. Interacts and SQSTM1. Interacts with PAAF1. Directly interacts with TRIM5. Post-translationally, monoubiquitinated by RNF181. Phosphorylated. Dephosphorylated by UBLCP1 which impairs PSMC2 ATPase activity and disrupts 26S proteasome assembly.

Its subcellular location is the cytoplasm. It localises to the nucleus. Its function is as follows. Component of the 26S proteasome, a multiprotein complex involved in the ATP-dependent degradation of ubiquitinated proteins. This complex plays a key role in the maintenance of protein homeostasis by removing misfolded or damaged proteins, which could impair cellular functions, and by removing proteins whose functions are no longer required. Therefore, the proteasome participates in numerous cellular processes, including cell cycle progression, apoptosis, or DNA damage repair. PSMC2 belongs to the heterohexameric ring of AAA (ATPases associated with diverse cellular activities) proteins that unfolds ubiquitinated target proteins that are concurrently translocated into a proteolytic chamber and degraded into peptides. The sequence is that of 26S proteasome regulatory subunit 7 (PSMC2) from Pongo abelii (Sumatran orangutan).